A 256-amino-acid chain; its full sequence is Small ribosomal subunit protein uS2 (256 aa).

The protein belongs to the universal ribosomal protein uS2 family.

This Brucella melitensis biotype 1 (strain ATCC 23456 / CCUG 17765 / NCTC 10094 / 16M) protein is Small ribosomal subunit protein uS2.